Consider the following 139-residue polypeptide: Hydrogenase maturation factor HypA (139 aa).

Met-1 and His-2 together coordinate Ni(2+). Positions 73 and 76 each coordinate Zn(2+). His-98 serves as a coordination point for Ni(2+). The Zn(2+) site is built by Cys-110 and Cys-113.

Belongs to the HypA/HybF family. Monomer and homodimer. Could also form hexamers. Forms a complex with HypB.

In terms of biological role, involved in the maturation of [NiFe] hydrogenases. Required for nickel insertion into the metal center of the hydrogenase. The sequence is that of Hydrogenase maturation factor HypA from Thermococcus kodakarensis (strain ATCC BAA-918 / JCM 12380 / KOD1) (Pyrococcus kodakaraensis (strain KOD1)).